Here is a 184-residue protein sequence, read N- to C-terminus: dCTP deaminase (184 aa).

DCTP contacts are provided by residues 107–112 (KSTYAR), 131–133 (TLE), Q152, Y166, and Q176. Residue E133 is the Proton donor/acceptor of the active site.

This sequence belongs to the dCTP deaminase family. As to quaternary structure, homotrimer.

The enzyme catalyses dCTP + H2O + H(+) = dUTP + NH4(+). The protein operates within pyrimidine metabolism; dUMP biosynthesis; dUMP from dCTP (dUTP route): step 1/2. Functionally, catalyzes the deamination of dCTP to dUTP. The sequence is that of dCTP deaminase from Gemmatimonas aurantiaca (strain DSM 14586 / JCM 11422 / NBRC 100505 / T-27).